The primary structure comprises 287 residues: MSEIGLVKIYSGKVRDLYEIDDKRMLMVASDRLSAFDVILDDPIPSKGEILTQISNFWFKKLAHIMPNHFTGQTVYDVLPENEAKVLEKRAVVAKKLTPVKVEAIVRGYLAGSGWKDYQKTGSVCGIRLPEGMQEAQQLPEVIFTPSTKAAVGDHDENISFEECGRIIGKELAEEVRAKAVRLYTEAAEYAKSRGIIICDTKFEFGLDTNGTLTLMDEVLTPDSSRFWPADQYKVGTNPPSFDKQFVRDWLEQSGWNKKAPAPKVPADVIQKTVEKYREALTLLTQD.

The protein belongs to the SAICAR synthetase family.

It catalyses the reaction 5-amino-1-(5-phospho-D-ribosyl)imidazole-4-carboxylate + L-aspartate + ATP = (2S)-2-[5-amino-1-(5-phospho-beta-D-ribosyl)imidazole-4-carboxamido]succinate + ADP + phosphate + 2 H(+). It functions in the pathway purine metabolism; IMP biosynthesis via de novo pathway; 5-amino-1-(5-phospho-D-ribosyl)imidazole-4-carboxamide from 5-amino-1-(5-phospho-D-ribosyl)imidazole-4-carboxylate: step 1/2. This is Phosphoribosylaminoimidazole-succinocarboxamide synthase from Neisseria meningitidis serogroup C (strain 053442).